Reading from the N-terminus, the 2207-residue chain is Mediator of RNA polymerase II transcription subunit 13-like (2207 aa).

The segment covering 337–355 has biased composition (polar residues); sequence VQSAASHLGSQDGGMSTMH. Disordered regions lie at residues 337-368, 384-403, 431-479, and 519-574; these read VQSAASHLGSQDGGMSTMHSPKRSRKTPPKLH, AQSKRSQMSTPTREEEAAHS, VGPS…KRPL, and KYDK…VPVN. The span at 356–368 shows a compositional bias: basic residues; that stretch reads SPKRSRKTPPKLH. Polar residues predominate over residues 384 to 394; that stretch reads AQSKRSQMSTP. The span at 442-453 shows a compositional bias: low complexity; that stretch reads PGFSAGLPSSSS. Positions 463–475 are enriched in basic and acidic residues; that stretch reads KTTERQEKGDKLQ. Polar residues predominate over residues 528 to 539; it reads SRNTSKQMNLNP. Positions 546-555 are enriched in pro residues; that stretch reads PISPLPPTLS. 2 positions are modified to phosphoserine: S548 and S555. Positions 664 to 668 match the LXXLL motif 1 motif; that stretch reads LQRLL. The span at 731 to 747 shows a compositional bias: basic and acidic residues; it reads GTEKDSLKKNKSEDGFG. The disordered stretch occupies residues 731–767; sequence GTEKDSLKKNKSEDGFGTKDVTTPGHSTPVPDGKNAM. S812 and S821 each carry phosphoserine. Positions 816 to 847 are disordered; the sequence is ELGAVSPALRSSKMPTVGTEERPPGKDGRAAG. Residues 834–844 show a composition bias toward basic and acidic residues; it reads TEERPPGKDGR. S918 carries the phosphoserine modification. The interval 1004 to 1091 is disordered; the sequence is DPDYVNTPQM…STTRPLNSVE (88 aa). Residues 1009–1019 show a composition bias toward polar residues; sequence NTPQMNTPVTL. Over residues 1020–1031 the composition is skewed to low complexity; it reads NSAAPASNSGAG. A compositionally biased stretch (polar residues) spans 1072-1087; the sequence is TDQGSPASTPSTTRPL. The LXXLL motif 2 motif lies at 1224–1228; the sequence is LLLLL. The leucine-zipper stretch occupies residues 1379–1400; the sequence is LPIPTLLVGYDKEFLTISPFSL. Disordered regions lie at residues 1523 to 1652 and 2042 to 2077; these read LMPP…SVTE and GNLHSSPNSSPVPSPGSPSGIGVGSHFQHSRSQGER. Residues 1541 to 1593 show a composition bias toward low complexity; it reads PGNAGSLPSNSGSGAPPAGSAFNPTSSSSANPTTSSSSASSGPPGSSAASAPG. 2 stretches are compositionally biased toward polar residues: residues 1612–1624 and 1635–1649; these read QNPSAGGSSTDRT and PGQSCTQSSQDGQDS. S2080 is subject to Phosphoserine.

This sequence belongs to the Mediator complex subunit 13 family. Component of the Mediator complex, which is composed of MED1, MED4, MED6, MED7, MED8, MED9, MED10, MED11, MED12, MED13, MED13L, MED14, MED15, MED16, MED17, MED18, MED19, MED20, MED21, MED22, MED23, MED24, MED25, MED26, MED27, MED29, MED30, MED31, CCNC, CDK8 and CDC2L6/CDK11. The MED12, MED13, CCNC and CDK8 subunits form a distinct module termed the CDK8 module. Mediator containing the CDK8 module is less active than Mediator lacking this module in supporting transcriptional activation. Individual preparations of the Mediator complex lacking one or more distinct subunits have been variously termed ARC, CRSP, DRIP, PC2, SMCC and TRAP. In terms of tissue distribution, highly expressed in heart and weakly expressed in brain, spleen, lung, liver, kidney and testis.

The protein localises to the nucleus. Component of the Mediator complex, a coactivator involved in the regulated transcription of nearly all RNA polymerase II-dependent genes. Mediator functions as a bridge to convey information from gene-specific regulatory proteins to the basal RNA polymerase II transcription machinery. Mediator is recruited to promoters by direct interactions with regulatory proteins and serves as a scaffold for the assembly of a functional preinitiation complex with RNA polymerase II and the general transcription factors. This subunit may specifically regulate transcription of targets of the Wnt signaling pathway and SHH signaling pathway. This chain is Mediator of RNA polymerase II transcription subunit 13-like (Med13l), found in Mus musculus (Mouse).